The following is a 477-amino-acid chain: Ankyrin repeat, SAM and basic leucine zipper domain-containing protein 1 (477 aa).

Ser-17, Ser-18, and Ser-20 each carry phosphoserine. ANK repeat units follow at residues 46-76 (EKKEKFKKALTTGDVSLVQELLDSGIISVDA), 80-109 (YGWTPLMYAASVANAELVRVLLDRGANASF), 112-146 (DKQTILITACSAHGSEEQILKCVELLLSRNADPNV), 150-179 (RLMTPIMYAARDGHTQVVALLVAHGAEVNT), 183-212 (NGYTALTWAARQGRKSIVLKLLELGANKML), and 216-245 (DGKLPSEIAKRNKHHEIFSLLSFTLNPLEG). Positions 274-336 (SYAAFGDLEV…KILTALKELE (63 aa)) constitute an SAM domain.

In terms of assembly, interacts with DDX4, PIWIL1, RANBP9 and TDRD1.

It localises to the cytoplasm. Its function is as follows. Plays a central role during spermatogenesis by repressing transposable elements and preventing their mobilization, which is essential for the germline integrity. Acts via the piRNA metabolic process, which mediates the repression of transposable elements during meiosis by forming complexes composed of piRNAs and Piwi proteins and governs the methylation and subsequent repression of transposons. Its association with pi-bodies suggests a participation in the primary piRNAs metabolic process. Required prior to the pachytene stage to facilitate the production of multiple types of piRNAs, including those associated with repeats involved in the regulation of retrotransposons. May act by mediating protein-protein interactions during germ cell maturation. This Ateles geoffroyi (Black-handed spider monkey) protein is Ankyrin repeat, SAM and basic leucine zipper domain-containing protein 1 (ASZ1).